Consider the following 396-residue polypeptide: S100P-binding protein (396 aa).

The segment at 145 to 249 (CDPVLDKDKI…RKNSGSHKSG (105 aa)) is disordered. Basic and acidic residues-rich tracts occupy residues 148–161 (VLDK…KETE) and 168–185 (EQTR…RCTE). Polar residues-rich tracts occupy residues 202 to 215 (SSPS…TASD) and 227 to 246 (VFSQ…SGSH).

In terms of assembly, interacts with S100P.

It is found in the nucleus. In Mus musculus (Mouse), this protein is S100P-binding protein.